Consider the following 182-residue polypeptide: uncharacterized protein (182 aa).

Disordered stretches follow at residues 1–49 and 126–171; these read MAAP…DGGS and QGGH…VHAQ. Over residues 17 to 39 the composition is skewed to basic and acidic residues; it reads ELLEKAARLERGPPPRGDPEAVG.

This is an uncharacterized protein from Homo sapiens (Human).